Consider the following 207-residue polypeptide: LysM and putative peptidoglycan-binding domain-containing protein 2 (207 aa).

The LysM domain occupies 61 to 105; the sequence is IEHRLSPSDTLQGIALKYGVTMEQIKRANKLFSTDCIFLRKSLNI. The segment at 186-207 is disordered; the sequence is AQRLKEEDLRHDDSYATCSYQH. The span at 188 to 199 shows a compositional bias: basic and acidic residues; that stretch reads RLKEEDLRHDDS.

This Xenopus tropicalis (Western clawed frog) protein is LysM and putative peptidoglycan-binding domain-containing protein 2 (lysmd2).